Here is a 353-residue protein sequence, read N- to C-terminus: Phosphate acyltransferase (353 aa).

The protein belongs to the PlsX family. As to quaternary structure, homodimer. Probably interacts with PlsY.

It localises to the cytoplasm. It carries out the reaction a fatty acyl-[ACP] + phosphate = an acyl phosphate + holo-[ACP]. Its pathway is lipid metabolism; phospholipid metabolism. Its function is as follows. Catalyzes the reversible formation of acyl-phosphate (acyl-PO(4)) from acyl-[acyl-carrier-protein] (acyl-ACP). This enzyme utilizes acyl-ACP as fatty acyl donor, but not acyl-CoA. This is Phosphate acyltransferase from Bradyrhizobium sp. (strain BTAi1 / ATCC BAA-1182).